Consider the following 397-residue polypeptide: MKILRLQDLIAAGQVAGQRVFIRADLNVPQDDAGHITEDTRIRASIPCIEMALKAGAAVMVTSHLGRPTEGEFKPEDSLAPVAARMGELMGREIPVIANWTDGVEVAPGQLVMLENCRLNKGEKKNNEALAQKMAALCDIFVHDAFGTAHRAEASTYGIAQFAKIACAGPLLAAEIDAISLALANPKRPLVAIVAGSKVSTKLTILKALSANVDGLIVGGGIANTFLLAAGLSIGKSLAEPDLVGEARAVIDAMKARGAAVPIPVDVVCAKTFSPTAEATVKAATDVADDDLILDIGPQTAAILAAQLKAAGTIVWNGPVGVFEFDAFAHGTETLARAIAESDAFSIAGGGDTLAAIAKYGIEKDVGYISTGGGAFLEVLEGKTLPAFEILTKRAAG.

Substrate contacts are provided by residues 25-27, Arg41, 64-67, Arg118, and Arg151; these read DLN and HLGR. ATP contacts are provided by residues Lys202, Glu324, and 350–353; that span reads GGDT.

This sequence belongs to the phosphoglycerate kinase family. As to quaternary structure, monomer.

The protein resides in the cytoplasm. The enzyme catalyses (2R)-3-phosphoglycerate + ATP = (2R)-3-phospho-glyceroyl phosphate + ADP. It functions in the pathway carbohydrate degradation; glycolysis; pyruvate from D-glyceraldehyde 3-phosphate: step 2/5. This Leptothrix cholodnii (strain ATCC 51168 / LMG 8142 / SP-6) (Leptothrix discophora (strain SP-6)) protein is Phosphoglycerate kinase.